Reading from the N-terminus, the 449-residue chain is MIWNSKTLSIALGIEISNSVNCNEVQFNSKDVKKGDLFIALQGNRDGHDYIQDAIDKGATAVIVSKQVEINDKDKIILVNNSFEALQKMALYKRENSKAKFIAITGSVGKTSTKEALKILLQHDFIVFASRGNFNNYLGLLINLASMADDTEYAIFELGMNHQGEISELVQILKPNIAMINNISEAHLEFFHSLEEIAEAKCEIFKNFSKNDIAIINASNNCYNKILSILKNLSITNIYSFGHSSKASAKLILYKTLGEQVHLQYYINNKFIDITIPFIPRHFANNYTGVLLIIDILGKDIEISAKYLADIALTKGRGKIINIQNSRVICDYYNASPQSMKAALEYLKQVPADNKTSIIGEMLELGWNSQRLHEELVPYILDAGCTKVYLVGAYTKYIYDLLPNKISKKFFKNVEELITHITDLFEYSELILIKGSRGVKLDKIVDYYQ.

ATP is bound at residue 106–112 (GSVGKTS).

Belongs to the MurCDEF family. MurF subfamily.

It is found in the cytoplasm. It catalyses the reaction D-alanyl-D-alanine + UDP-N-acetyl-alpha-D-muramoyl-L-alanyl-gamma-D-glutamyl-meso-2,6-diaminopimelate + ATP = UDP-N-acetyl-alpha-D-muramoyl-L-alanyl-gamma-D-glutamyl-meso-2,6-diaminopimeloyl-D-alanyl-D-alanine + ADP + phosphate + H(+). It participates in cell wall biogenesis; peptidoglycan biosynthesis. Its function is as follows. Involved in cell wall formation. Catalyzes the final step in the synthesis of UDP-N-acetylmuramoyl-pentapeptide, the precursor of murein. The polypeptide is UDP-N-acetylmuramoyl-tripeptide--D-alanyl-D-alanine ligase (Rickettsia prowazekii (strain Madrid E)).